A 178-amino-acid chain; its full sequence is Neuroblastoma suppressor of tumorigenicity 1 (178 aa).

An N-terminal signal peptide occupies residues 1–16 (MLWVLVGAVLPVMLLA). 5 disulfides stabilise this stretch: Cys34–Cys84, Cys48–Cys98, Cys58–Cys117, Cys62–Cys119, and Cys81–Cys122. In terms of domain architecture, CTCK spans 34–123 (CEAKNITQIV…IVHCSCQACG (90 aa)). A disordered region spans residues 132–178 (NVYVQGEDSPGSQPGPHSHAHPHPGGQTPEPEEPPGAPQVEEEGAED). Positions 140–160 (SPGSQPGPHSHAHPHPGGQTP) are enriched in low complexity.

It belongs to the DAN family. As to quaternary structure, homodimer.

It localises to the secreted. Possible candidate as a tumor suppressor gene of neuroblastoma. May play an important role in preventing cells from entering the final stage (G1/S) of the transformation process. The chain is Neuroblastoma suppressor of tumorigenicity 1 (Nbl1) from Mus musculus (Mouse).